Here is a 201-residue protein sequence, read N- to C-terminus: NADH-quinone oxidoreductase subunit C (201 aa).

The protein belongs to the complex I 30 kDa subunit family. As to quaternary structure, NDH-1 is composed of 14 different subunits. Subunits NuoB, C, D, E, F, and G constitute the peripheral sector of the complex.

Its subcellular location is the cell inner membrane. It catalyses the reaction a quinone + NADH + 5 H(+)(in) = a quinol + NAD(+) + 4 H(+)(out). NDH-1 shuttles electrons from NADH, via FMN and iron-sulfur (Fe-S) centers, to quinones in the respiratory chain. The immediate electron acceptor for the enzyme in this species is believed to be ubiquinone. Couples the redox reaction to proton translocation (for every two electrons transferred, four hydrogen ions are translocated across the cytoplasmic membrane), and thus conserves the redox energy in a proton gradient. The chain is NADH-quinone oxidoreductase subunit C from Ruegeria sp. (strain TM1040) (Silicibacter sp.).